We begin with the raw amino-acid sequence, 407 residues long: Protein RecA (407 aa).

79-86 (GPESSGKT) is an ATP binding site. Residues 358 to 407 (LSLEASPEESDAKTLRRXASRGAGASSSRVQEGSAANDHFQDESTTAKLL) form a disordered region. The segment covering 377-386 (SRGAGASSSR) has biased composition (low complexity).

It belongs to the RecA family.

The protein localises to the cytoplasm. Can catalyze the hydrolysis of ATP in the presence of single-stranded DNA, the ATP-dependent uptake of single-stranded DNA by duplex DNA, and the ATP-dependent hybridization of homologous single-stranded DNAs. It interacts with LexA causing its activation and leading to its autocatalytic cleavage. The sequence is that of Protein RecA from Treponema pallidum (strain Nichols).